Consider the following 300-residue polypeptide: Probable acetyltransferase Rv3034c (300 aa).

The N-terminal stretch at M1–A25 is a signal peptide.

This sequence belongs to the transferase hexapeptide repeat family.

Its function is as follows. May be involved in the biosynthesis of 6-O-methylglucosyl-containing lipopolysaccharides (MGLP). Regulates host peroxisome homeostasis in response to intracellular redox levels to favor mycobacterial infection in macrophage. Induces the expression of host peroxisome biogenesis and proliferation factors as well as peroxisome associated enzymes. Inhibits the induction of host pexophagy mechanism by down-regulating the expression of pexophagy associated proteins and adapter molecules in infected macrophages. However, during increased oxidative stress conditions, it induces degradation of dysfunctional and damaged peroxisomes. Regulation of peroxisome biogenesis and degradation is dependent upon host p-mTORC1 mediated signaling pathway. This Mycobacterium tuberculosis (strain ATCC 25618 / H37Rv) protein is Probable acetyltransferase Rv3034c.